The following is a 61-amino-acid chain: Photosystem II reaction center X protein (61 aa).

The chain crosses the membrane as a helical span at residues 26 to 46; sequence IGSFIAAALLIVIPATAFLIF.

It belongs to the PsbX family. Type 2 subfamily. PSII consists of a core antenna complex that captures photons, and an electron transfer chain that converts photonic excitation into a charge separation. PSII forms dimeric complexes.

The protein resides in the cellular thylakoid membrane. Its function is as follows. Involved in the binding and/or turnover of quinones at the Q(B) site of Photosystem II. This is Photosystem II reaction center X protein from Prochlorococcus marinus (strain MIT 9312).